Reading from the N-terminus, the 101-residue chain is Small ribosomal subunit protein uS14 (101 aa).

Belongs to the universal ribosomal protein uS14 family. As to quaternary structure, part of the 30S ribosomal subunit. Contacts proteins S3 and S10.

Its function is as follows. Binds 16S rRNA, required for the assembly of 30S particles and may also be responsible for determining the conformation of the 16S rRNA at the A site. This chain is Small ribosomal subunit protein uS14, found in Paracoccus denitrificans (strain Pd 1222).